A 104-amino-acid polypeptide reads, in one-letter code: Large ribosomal subunit protein uL24 (104 aa).

This sequence belongs to the universal ribosomal protein uL24 family. As to quaternary structure, part of the 50S ribosomal subunit.

Functionally, one of two assembly initiator proteins, it binds directly to the 5'-end of the 23S rRNA, where it nucleates assembly of the 50S subunit. Its function is as follows. One of the proteins that surrounds the polypeptide exit tunnel on the outside of the subunit. This chain is Large ribosomal subunit protein uL24, found in Shewanella loihica (strain ATCC BAA-1088 / PV-4).